We begin with the raw amino-acid sequence, 457 residues long: Multidrug resistance protein MdtK (457 aa).

12 helical membrane-spanning segments follow: residues 11-31, 53-73, 93-113, 127-147, 160-180, 188-208, 243-263, 276-296, 314-334, 350-370, 387-407, and 418-438; these read LLAL…MGFV, IWLP…PVIA, WLAG…GYII, AVGY…FQVA, GMVM…IFIY, LGGI…FIAM, LPIA…ALLV, IALN…AAVT, AART…IFTV, VVAL…SDSI, IFFI…YILA, and PAGF…LMML.

The protein belongs to the multi antimicrobial extrusion (MATE) (TC 2.A.66.1) family. MdtK subfamily.

The protein resides in the cell inner membrane. Multidrug efflux pump that functions probably as a Na(+)/drug antiporter. The protein is Multidrug resistance protein MdtK of Salmonella newport (strain SL254).